The chain runs to 215 residues: Putative BTB/POZ domain-containing protein At2g05330 (215 aa).

Residues 17 to 87 (SWQKIGKLTY…LYSDGSMLSS (71 aa)) enclose the BTB domain.

It functions in the pathway protein modification; protein ubiquitination. May act as a substrate-specific adapter of an E3 ubiquitin-protein ligase complex (CUL3-RBX1-BTB) which mediates the ubiquitination and subsequent proteasomal degradation of target proteins. The sequence is that of Putative BTB/POZ domain-containing protein At2g05330 from Arabidopsis thaliana (Mouse-ear cress).